The following is a 505-amino-acid chain: TBC1 domain family member 22B (505 aa).

Position 2 is an N-acetylalanine (Ala2). Ser58 and Ser116 each carry phosphoserine. Positions Ser105–Arg146 are disordered. Over residues Lys129–Arg146 the composition is skewed to polar residues. Ser154 carries the post-translational modification Phosphoserine. The region spanning Gly210–Pro434 is the Rab-GAP TBC domain.

In terms of assembly, interacts with ACBD3 and ARFGEF1. Interacts with YWHAB, YWHAE, YWHAG, YWHAH, YWHAQ and YWHAZ.

Functionally, may act as a GTPase-activating protein for Rab family protein(s). This is TBC1 domain family member 22B (TBC1D22B) from Homo sapiens (Human).